Here is a 398-residue protein sequence, read N- to C-terminus: Glia-derived nexin (398 aa).

The first 19 residues, 1–19, serve as a signal peptide directing secretion; that stretch reads MNWHLPLFLLASVTLPSIC. N-linked (GlcNAc...) asparagine glycosylation is found at asparagine 118 and asparagine 159.

It belongs to the serpin family.

The protein localises to the secreted. It is found in the extracellular space. Functionally, serine protease inhibitor with activity toward thrombin, trypsin, and urokinase. Promotes neurite extension by inhibiting thrombin. Binds heparin. This is Glia-derived nexin (SERPINE2) from Homo sapiens (Human).